We begin with the raw amino-acid sequence, 1720 residues long: Merozoite surface protein 1 (1720 aa).

The signal sequence occupies residues 1–19 (MKIIFFLCSFLFFIINTQC). A compositionally biased stretch (low complexity) spans 63 to 112 (ASAQSGASAQSGASAQSGASAQSGASAQSGASAQSGTSGPSGPSGTSPSS). The tract at residues 63–137 (ASAQSGASAQ…PPADASDSDA (75 aa)) is disordered. The span at 113–122 (RSNTLPRSNT) shows a compositional bias: polar residues. A compositionally biased stretch (low complexity) spans 123–132 (SSGASPPADA). Residues 474–519 (INNIKKKIDLEEKNINHTKEQNKKLLEDYEKSKKDYEELLEKFYEM) are a coiled coil. Disordered stretches follow at residues 723–775 (SETT…PPKE), 908–955 (TGTS…SGPA), 1249–1278 (TPPQPDVTPSPLSVRVSGSSGSTKEETQIP), and 1470–1491 (KEKFPSSPPTTPPSPAKTDEQK). The span at 743–753 (EVTEETEETEE) shows a compositional bias: acidic residues. A compositionally biased stretch (low complexity) spans 908–946 (TGTSSTSSPGNTTVNTAQSATHSNSQNQQSNASSTNTQN). Residues 1264–1278 (VSGSSGSTKEETQIP) show a composition bias toward polar residues. Over residues 1475–1484 (SSPPTTPPSP) the composition is skewed to pro residues. EGF-like domains lie at 1611 to 1651 (HQCV…VENP) and 1652 to 1693 (NPTC…YPLF). Disulfide bonds link C1613/C1624, C1618/C1634, C1636/C1647, C1655/C1668, C1662/C1682, and C1684/C1698. A lipid anchor (GPI-anchor amidated serine) is attached at S1699. Residues 1700–1720 (SSNFLGISFLLILMLILYSFI) constitute a propeptide, removed in mature form.

As to quaternary structure, forms a complex composed of subunits p83, p30, p38, and p42 which remain non-covalently associated; the complex is formed at the merozoite surface prior to egress from host erythrocytes. Forms a complex composed of processed MSP1 subunits, MSP6 subunit p36 and MSP7; the complex is formed at the merozoite surface prior to egress from host erythrocytes. Within the complex, interacts (via subunit p38) with MSP6 subunit p36 and (via subunits p83, p30 and p38) with MSP7 (via subunit p22). Forms a complex composed of MSP1, MSP6, DBLMSP1 and DBLMSP2. Within the complex, interacts (via subunit p38) with DBLMSP1 and DBLMSP2. Forms a complex composed of MSP1, and rhoptry proteins RhopH3, RAP1 and CLAG9/RhopH3. Within the complex, interacts (via subunits p42 and p19) with RhopH3 (via C-terminus). Forms a complex composed of MSP1, MSP6, MSP7, MSP9 and MSP3; within the complex, MSP6 and MSP9 mediate the binding to the host erythrocyte. Interacts (via subunits p19 and p42) with MSP9; the interaction is direct; MSP1 subunits p19 or p42, and MSP9 form a co-ligand complex that interacts with host SLC4A1/Band 3 protein. May interact with PFD6. Interacts with host spectrin. Interacts with host glycophorin GYPA in a sialic acid-independent manner. In terms of assembly, interacts with host proinflammatory cytokine S100P; the interaction blocks S100P inflammatory and chemotactic activities. As to quaternary structure, interacts with host SLC4A1/Band 3 (via 5ABC region) on the host erythrocyte surface in a sialic acid-independent manner. The p190 precursor is cleaved by SUB1 prior to merozoite egress into 4 subunits p83, p30, p38, and p42 which remain non-covalently associated. SUB1-mediated proteolytic cleavage occurs in an orderly manner; the first cleavage occurs at the p30/p38 site, followed by cleavage at the p83/p30 site, in the 3D7 strain a second cleavage occurs at the N-terminus of p83, the last cleavage occurs at the p38/p42 site. The order of cleavage is essential for parasite viability. SUB1-mediated processing is essential for merozoite egress. In a second processing step during erythrocyte invasion, p42 is cleaved by SUB2 into p33 and p19; the latter remains attached to the merozoite surface via its GPI-anchor and is endocytosed during the subsequent ring stage.

Its subcellular location is the cell membrane. It is found in the secreted. The protein resides in the vacuole membrane. Functionally, during the asexual blood stage, involved in merozoite egress from host erythrocytes possibly via its interaction with the host cytoskeleton protein spectrin resulting in the destabilization of the host cytoskeleton and thus leading to erythrocyte cell membrane rupture. Involved in the binding to host erythrocytes and is required for host erythrocyte invasion. Its function is as follows. By binding to host proinflammatory cytokine S100P may interfere with host immune responses. In terms of biological role, involved in merozoite invasion of host erythrocytes. May play a role in the biogenesis and/or function of the food vacuole during the intraerythrocytic development. This chain is Merozoite surface protein 1, found in Plasmodium falciparum (isolate 3D7).